Reading from the N-terminus, the 144-residue chain is Deoxyuridine 5'-triphosphate nucleotidohydrolase (144 aa).

Substrate-binding positions include 63–65 (RSG), Asn76, 80–82 (TID), and Lys90.

Belongs to the dUTPase family. Requires Mg(2+) as cofactor.

It catalyses the reaction dUTP + H2O = dUMP + diphosphate + H(+). It functions in the pathway pyrimidine metabolism; dUMP biosynthesis; dUMP from dCTP (dUTP route): step 2/2. Functionally, this enzyme is involved in nucleotide metabolism: it produces dUMP, the immediate precursor of thymidine nucleotides and it decreases the intracellular concentration of dUTP so that uracil cannot be incorporated into DNA. The chain is Deoxyuridine 5'-triphosphate nucleotidohydrolase from Hydrogenobaculum sp. (strain Y04AAS1).